We begin with the raw amino-acid sequence, 159 residues long: tRNA-specific adenosine deaminase (159 aa).

One can recognise a CMP/dCMP-type deaminase domain in the interval 6–133; that stretch reads EEQTYFMQEA…ERLNHRVQVE (128 aa). Position 57 (H57) interacts with Zn(2+). The active-site Proton donor is E59. The Zn(2+) site is built by C87 and C90.

The protein belongs to the cytidine and deoxycytidylate deaminase family. In terms of assembly, homodimer. The cofactor is Zn(2+).

The enzyme catalyses adenosine(34) in tRNA + H2O + H(+) = inosine(34) in tRNA + NH4(+). In terms of biological role, catalyzes the deamination of adenosine to inosine at the wobble position 34 of tRNA(Arg2). This is tRNA-specific adenosine deaminase from Streptococcus pyogenes serotype M18 (strain MGAS8232).